The chain runs to 505 residues: Exoglucanase 1 (505 aa).

Positions 1-17 (MYRKLAVISAFLAAARA) are cleaved as a signal peptide. Position 18 is a pyrrolidone carboxylic acid (Q18). The segment at 18-449 (QQVCTQQAET…GSTGGNTGSN (432 aa)) is catalytic. Cystine bridges form between C21–C88, C36–C41, C66–C87, and C77–C83. 2 N-linked (GlcNAc...) asparagine glycosylation sites follow: N93 and N126. Disulfide bonds link C151–C410, C185–C223, C189–C222, C243–C269, C251–C256, and C274–C344. Residue E225 is the Nucleophile of the active site. Catalysis depends on E230, which acts as the Proton donor/acceptor. Residues N283 and N397 are each glycosylated (N-linked (GlcNAc...) asparagine). 2 disordered regions span residues 399–423 (TAST…VEAQ) and 440–472 (GSTG…ATQT). Residues 409 to 423 (SCSTSSGVPAQVEAQ) show a composition bias toward polar residues. Low complexity predominate over residues 447–470 (GSNPPGTSTTRAPPSSTGSSPTAT). Residues 450–468 (PPGTSTTRAPPSSTGSSPT) form a linker region. A CBM1 domain is found at 469–505 (ATQTHYGQCGGTGWTGPTRCASGYTCQVLNPFYSQCL).

It belongs to the glycosyl hydrolase 7 (cellulase C) family. O-glycosylated. O-glycosylation of the cellulase linker provides protection from proteolysis. Linker glycans also contribute to binding affinity of cellobiohydrolases to cellulose.

The protein localises to the secreted. The catalysed reaction is Hydrolysis of (1-&gt;4)-beta-D-glucosidic linkages in cellulose and cellotetraose, releasing cellobiose from the non-reducing ends of the chains.. Exocellobiohydrolases (CBH) that catalyzes the hydrolysis of 1,4-beta-D-glucosidic bonds in cellulose to release the disaccharide cellobiose. The degradation of cellulose involves an interplay between different cellulolytic enzymes. Hydrolysis starts with endoglucanases (EGs), which cut internal beta-1,4-glucosidic bonds in cellulose to reduce the polymerization degree of the substrate and create new chain ends for exocellobiohydrolases (CBHs). The CBHs release the disaccharide cellobiose from the non-reducing end of the cellulose polymer chain. Finally, beta-1,4-glucosidases hydrolyze the cellobiose and other short cello-oligosaccharides into glucose units. The chain is Exoglucanase 1 (cbh1) from Trichoderma harzianum (Hypocrea lixii).